Consider the following 281-residue polypeptide: UPF0750 membrane protein YvjA (281 aa).

5 consecutive transmembrane segments (helical) span residues 14 to 34 (YVYILIGAAITAVSFNVFLLP), 56 to 76 (AAYVQWIINIPLFIAGVILLG), 77 to 97 (GKFGLKTLAGSVFLPLVVFLT), 108 to 128 (LLAAIFGGVGIGIGIGIVYLG), and 149 to 169 (SLGKCLAIIDGMIVVTAMIVF).

Belongs to the UPF0750 family.

The protein localises to the cell membrane. This chain is UPF0750 membrane protein YvjA (yvjA), found in Bacillus subtilis (strain 168).